Here is a 166-residue protein sequence, read N- to C-terminus: Small ribosomal subunit protein uS5 (166 aa).

The S5 DRBM domain occupies 11 to 74 (LNEKLIAVNR…EKARRNMFTI (64 aa)).

This sequence belongs to the universal ribosomal protein uS5 family. As to quaternary structure, part of the 30S ribosomal subunit. Contacts proteins S4 and S8.

With S4 and S12 plays an important role in translational accuracy. Functionally, located at the back of the 30S subunit body where it stabilizes the conformation of the head with respect to the body. This Aliivibrio salmonicida (strain LFI1238) (Vibrio salmonicida (strain LFI1238)) protein is Small ribosomal subunit protein uS5.